The sequence spans 435 residues: Glutamate-1-semialdehyde 2,1-aminomutase (435 aa).

An N6-(pyridoxal phosphate)lysine modification is found at Lys269.

Belongs to the class-III pyridoxal-phosphate-dependent aminotransferase family. HemL subfamily. Homodimer. The cofactor is pyridoxal 5'-phosphate.

The protein resides in the cytoplasm. It carries out the reaction (S)-4-amino-5-oxopentanoate = 5-aminolevulinate. Its pathway is porphyrin-containing compound metabolism; protoporphyrin-IX biosynthesis; 5-aminolevulinate from L-glutamyl-tRNA(Glu): step 2/2. The sequence is that of Glutamate-1-semialdehyde 2,1-aminomutase from Gemmatimonas aurantiaca (strain DSM 14586 / JCM 11422 / NBRC 100505 / T-27).